The sequence spans 548 residues: 2-succinyl-5-enolpyruvyl-6-hydroxy-3-cyclohexene-1-carboxylate synthase (548 aa).

The protein belongs to the TPP enzyme family. MenD subfamily. In terms of assembly, homodimer. Requires Mg(2+) as cofactor. Mn(2+) serves as cofactor. It depends on thiamine diphosphate as a cofactor.

The enzyme catalyses isochorismate + 2-oxoglutarate + H(+) = 5-enolpyruvoyl-6-hydroxy-2-succinyl-cyclohex-3-ene-1-carboxylate + CO2. Its pathway is quinol/quinone metabolism; 1,4-dihydroxy-2-naphthoate biosynthesis; 1,4-dihydroxy-2-naphthoate from chorismate: step 2/7. The protein operates within quinol/quinone metabolism; menaquinone biosynthesis. Catalyzes the thiamine diphosphate-dependent decarboxylation of 2-oxoglutarate and the subsequent addition of the resulting succinic semialdehyde-thiamine pyrophosphate anion to isochorismate to yield 2-succinyl-5-enolpyruvyl-6-hydroxy-3-cyclohexene-1-carboxylate (SEPHCHC). In Mycobacterium marinum (strain ATCC BAA-535 / M), this protein is 2-succinyl-5-enolpyruvyl-6-hydroxy-3-cyclohexene-1-carboxylate synthase.